The sequence spans 157 residues: Protein Smg (157 aa).

Belongs to the Smg family.

This Enterobacter sp. (strain 638) protein is Protein Smg.